A 454-amino-acid polypeptide reads, in one-letter code: Chromosomal replication initiator protein DnaA (454 aa).

Positions 1 to 83 (MMTDSMRLVW…RPLKVLLEVA (83 aa)) are domain I, interacts with DnaA modulators. The interval 83-115 (AECVAEAPETPEEAPQQLCLPAFADIPRPSSGR) is domain II. The segment at 116–333 (LLNRDFTFDS…SGIKGLAARN (218 aa)) is domain III, AAA+ region. ATP is bound by residues G160, G162, K163, and S164. Positions 334–454 (SIMGRGIDLK…LCGKIEAGEF (121 aa)) are domain IV, binds dsDNA.

It belongs to the DnaA family. In terms of assembly, oligomerizes as a right-handed, spiral filament on DNA at oriC.

The protein localises to the cytoplasm. Plays an essential role in the initiation and regulation of chromosomal replication. ATP-DnaA binds to the origin of replication (oriC) to initiate formation of the DNA replication initiation complex once per cell cycle. Binds the DnaA box (a 9 base pair repeat at the origin) and separates the double-stranded (ds)DNA. Forms a right-handed helical filament on oriC DNA; dsDNA binds to the exterior of the filament while single-stranded (ss)DNA is stabiized in the filament's interior. The ATP-DnaA-oriC complex binds and stabilizes one strand of the AT-rich DNA unwinding element (DUE), permitting loading of DNA polymerase. After initiation quickly degrades to an ADP-DnaA complex that is not apt for DNA replication. Binds acidic phospholipids. The protein is Chromosomal replication initiator protein DnaA of Desulfatibacillum aliphaticivorans.